Here is a 134-residue protein sequence, read N- to C-terminus: Interleukin-4 (134 aa).

An N-terminal signal peptide occupies residues 1-23 (MGLTYQLLPALVCLLACTSFIQG). Cystine bridges form between cysteine 24–cysteine 133 and cysteine 48–cysteine 88. The N-linked (GlcNAc...) asparagine glycan is linked to asparagine 38. N-linked (GlcNAc...) asparagine glycosylation is present at asparagine 101.

The protein belongs to the IL-4/IL-13 family.

Its subcellular location is the secreted. Functionally, participates in at least several B-cell activation processes as well as of other cell types. It is a costimulator of DNA-synthesis. It induces the expression of class II MHC molecules on resting B-cells. It enhances both secretion and cell surface expression of IgE and IgG1. It also regulates the expression of the low affinity Fc receptor for IgE (CD23) on both lymphocytes and monocytes. Positively regulates IL31RA expression in macrophages. Stimulates autophagy in dendritic cells by interfering with mTORC1 signaling and through the induction of RUFY4. This Equus caballus (Horse) protein is Interleukin-4 (IL4).